We begin with the raw amino-acid sequence, 200 residues long: Adenine phosphoribosyltransferase (200 aa).

This sequence belongs to the purine/pyrimidine phosphoribosyltransferase family. Homodimer.

The protein localises to the cytoplasm. It catalyses the reaction AMP + diphosphate = 5-phospho-alpha-D-ribose 1-diphosphate + adenine. It participates in purine metabolism; AMP biosynthesis via salvage pathway; AMP from adenine: step 1/1. Catalyzes a salvage reaction resulting in the formation of AMP, that is energically less costly than de novo synthesis. This is Adenine phosphoribosyltransferase from Sorangium cellulosum (strain So ce56) (Polyangium cellulosum (strain So ce56)).